We begin with the raw amino-acid sequence, 357 residues long: Peptide chain release factor 1 (357 aa).

Gln236 carries the post-translational modification N5-methylglutamine. Over residues 284 to 293 the composition is skewed to basic and acidic residues; it reads RRKKDQERAN. The interval 284–313 is disordered; that stretch reads RRKKDQERANNRRKQIGSGDRSERIRTYNF.

It belongs to the prokaryotic/mitochondrial release factor family. Post-translationally, methylated by PrmC. Methylation increases the termination efficiency of RF1.

The protein resides in the cytoplasm. Functionally, peptide chain release factor 1 directs the termination of translation in response to the peptide chain termination codons UAG and UAA. This Rickettsia bellii (strain RML369-C) protein is Peptide chain release factor 1.